A 600-amino-acid polypeptide reads, in one-letter code: Methionine--tRNA ligase (600 aa).

The 'HIGH' region motif lies at 11-21 (PYANGPRHIGH). Cys-143, Cys-146, Cys-156, and Cys-159 together coordinate Zn(2+). The 'KMSKS' region signature appears at 351-355 (KFSSS). Residue Ser-354 participates in ATP binding.

This sequence belongs to the class-I aminoacyl-tRNA synthetase family. MetG type 1 subfamily. Monomer. The cofactor is Zn(2+).

The protein resides in the cytoplasm. The catalysed reaction is tRNA(Met) + L-methionine + ATP = L-methionyl-tRNA(Met) + AMP + diphosphate. In terms of biological role, is required not only for elongation of protein synthesis but also for the initiation of all mRNA translation through initiator tRNA(fMet) aminoacylation. The polypeptide is Methionine--tRNA ligase (Salinispora arenicola (strain CNS-205)).